A 207-amino-acid chain; its full sequence is Small ribosomal subunit protein uS3 (207 aa).

The region spanning 17 to 86 is the KH type-2 domain; it reads IDEYLEKELR…NPQIEVEEIK (70 aa).

This sequence belongs to the universal ribosomal protein uS3 family. Part of the 30S ribosomal subunit.

In terms of biological role, binds the lower part of the 30S subunit head. The chain is Small ribosomal subunit protein uS3 from Thermococcus sibiricus (strain DSM 12597 / MM 739).